Here is a 325-residue protein sequence, read N- to C-terminus: SAM pointed domain-containing Ets transcription factor (325 aa).

Disordered regions lie at residues 27–50 (GTEK…PPAT) and 79–100 (ARAG…SQAS). The 85-residue stretch at 119–203 (EVLKDIETAC…AHLDIWKSAA (85 aa)) folds into the PNT domain. The ETS DNA-binding region spans 239–322 (IHLWQFLKEL…ISQRLVYQFV (84 aa)).

The protein belongs to the ETS family. Interacts with the DNA-binding domain of the androgen receptor. Interacts with NKX3-1. In terms of tissue distribution, expressed in the accessory glands of sex organs including the prostate, seminal vesicle, coagulating gland in males, the oviduct in females, and in intestines. Expression is epithelial-specific.

It is found in the nucleus. May function as an androgen-independent transactivator of the prostate-specific antigen (PSA) promoter. Binds to 5'-GGAT-3' DNA sequences. May play a role in the regulation of the prostate gland and/or prostate cancer development. Acts as a transcriptional activator for SERPINB5 promoter. This Mus musculus (Mouse) protein is SAM pointed domain-containing Ets transcription factor (Spdef).